A 161-amino-acid polypeptide reads, in one-letter code: Phosphopantetheine adenylyltransferase (161 aa).

Ser-11 contacts substrate. ATP contacts are provided by residues Ser-11 to Phe-12 and His-19. Residues Lys-43, Leu-75, and Arg-89 each contribute to the substrate site. ATP contacts are provided by residues Gly-90–Arg-92, Glu-100, and Tyr-125–Ser-131.

Belongs to the bacterial CoaD family. As to quaternary structure, homohexamer. It depends on Mg(2+) as a cofactor.

The protein resides in the cytoplasm. It catalyses the reaction (R)-4'-phosphopantetheine + ATP + H(+) = 3'-dephospho-CoA + diphosphate. It participates in cofactor biosynthesis; coenzyme A biosynthesis; CoA from (R)-pantothenate: step 4/5. Its function is as follows. Reversibly transfers an adenylyl group from ATP to 4'-phosphopantetheine, yielding dephospho-CoA (dPCoA) and pyrophosphate. This chain is Phosphopantetheine adenylyltransferase, found in Staphylococcus haemolyticus (strain JCSC1435).